A 683-amino-acid chain; its full sequence is U4/U6 small nuclear ribonucleoprotein Prp3 (683 aa).

The PWI domain occupies 1–87 (MALSKRELDE…HSKSSSDRSR (87 aa)). Residues 73 to 107 (GRSSRHSKSSSDRSRKRDLKEVFGDDSEISKESSG) are compositionally biased toward basic and acidic residues. A disordered region spans residues 73–135 (GRSSRHSKSS…IPGPPSESPG (63 aa)). Residue lysine 139 forms a Glycyl lysine isopeptide (Lys-Gly) (interchain with G-Cter in SUMO2) linkage. The interval 153 to 183 (IEERKKQLSFISPPTPQPKTPSSSQPERLPI) is disordered. A Phosphoserine modification is found at serine 164. A Phosphothreonine modification is found at threonine 167. Residues lysine 244 and lysine 252 each participate in a glycyl lysine isopeptide (Lys-Gly) (interchain with G-Cter in SUMO2) cross-link. Residues 416–550 (NLVEHPAQLN…VHISVYRVRN (135 aa)) form a mediates interaction with SART3 region. Residue serine 619 is modified to Phosphoserine.

In terms of assembly, component of the precatalytic spliceosome (spliceosome B complex). Component of the U4/U6-U5 tri-snRNP complex, a building block of the precatalytic spliceosome (spliceosome B complex). The U4/U6-U5 tri-snRNP complex is composed of the U4, U6 and U5 snRNAs and at least PRPF3, PRPF4, PRPF6, PRPF8, PRPF31, SNRNP200, TXNL4A, SNRNP40, SNRPB, SNRPD1, SNRPD2, SNRPD3, SNRPE, SNRPF, SNRPG, DDX23, CD2BP2, PPIH, SNU13, EFTUD2, SART1 and USP39, plus LSM2, LSM3, LSM4, LSM5, LSM6, LSM7 and LSM8. Interacts directly with PRPF4. Part of a heteromeric complex containing PPIH, PRPF3 and PRPF4 that is stable in the absence of RNA. Interacts with SART3; the interaction is direct and recruits the deubiquitinase USP4 to PRPF3. Interacts with PRPF19. Interacts ('Lys-63'-linked polyubiquitinated) with PRPF8 (via the MPN (JAB/Mov34) domain); may stabilize the U4/U6-U5 tri-snRNP complex. Interacts with ERCC6. Post-translationally, ubiquitinated. Undergoes 'Lys-63'-linked polyubiquitination by PRPF19 and deubiquitination by USP4. 'Lys-63'-linked ubiquitination increases the affinity for PRPF8 and may regulate the assembly of the U4/U6-U5 tri-snRNP complex.

It localises to the nucleus. Its subcellular location is the nucleus speckle. Functionally, plays a role in pre-mRNA splicing as component of the U4/U6-U5 tri-snRNP complex that is involved in spliceosome assembly, and as component of the precatalytic spliceosome (spliceosome B complex). This is U4/U6 small nuclear ribonucleoprotein Prp3 (PRPF3) from Bos taurus (Bovine).